Reading from the N-terminus, the 609-residue chain is MIALEKLSEKNKRSTKKCEISIYVGNLPSTCQSSDLHELFEPFGNFSKFHMLSRKKNKSTDSKSPTLFAFITFENKCSADNAIASLNGSSFQGNTLKVEYTHIVERYKNKLENGVDQIHHSNNEKAKIRFSKIEKYTKETRPTVSEVRVSTKDKKEYSMNTSNLVQSNPPKVHDKENAFAEATGTSILSSKAVQTLLVSDFTENEPKHLSIRPNCKDNNTPSISNTFIEPYKENNTEHLHLKSAFEPCQMMPGMLLEQNPQFLYDNPSIFVIGILNLPLKVSPVELYNEFSNHGHILGVAINQSINEDMTHYAEVAVSTYESCIEIIEKFHAIAYEGSILQLFIKQPVQGFCSNLLNHPEGTMTNLLPPNMEMPQPFEIPVIAKTSALPNPFISFPSFQTSYETTVTPTPTSTPTIDPCNLFVKNLDDNIVGNTQQLEELFSKFGRIKSCTLASYPSTEISKGYGFVSFSHPFEAVQAINTLNGVLFGKKRLFVNYAEKREDRKKRLSAIFSQSYPPVVPSPSLTIPMATEPQILEYHQEWPQPLIQSIQQHGYSDPRQTLPTRLDSCAAKLREAVISNENLNPSHKFGIKHSTFKTSLSPLTNIVLNQ.

RRM domains follow at residues 20–103 (ISIY…YTHI) and 419–499 (CNLF…YAEK).

Its subcellular location is the cytoplasm. Functionally, has a role in sporulation. This is Meiotically up-regulated gene 28 protein (mug28) from Schizosaccharomyces pombe (strain 972 / ATCC 24843) (Fission yeast).